The sequence spans 437 residues: GTPase Der (437 aa).

2 consecutive EngA-type G domains span residues 4–167 (PIVA…PDNA) and 175–352 (IHFS…QHHR). GTP-binding positions include 10–17 (GRPNVGKS), 57–61 (DTGGI), 119–122 (NKVD), 181–188 (GRPNVGKS), 229–233 (DTAGI), and 294–297 (NKWD). The region spanning 353–437 (QRIQSAVLND…PIHLIKRQRQ (85 aa)) is the KH-like domain.

It belongs to the TRAFAC class TrmE-Era-EngA-EngB-Septin-like GTPase superfamily. EngA (Der) GTPase family. Associates with the 50S ribosomal subunit.

In terms of biological role, GTPase that plays an essential role in the late steps of ribosome biogenesis. This Limosilactobacillus reuteri (strain DSM 20016) (Lactobacillus reuteri) protein is GTPase Der.